Consider the following 204-residue polypeptide: Peptidyl-tRNA hydrolase (204 aa).

Tyr19 provides a ligand contact to tRNA. Residue His24 is the Proton acceptor of the active site. 3 residues coordinate tRNA: Tyr70, Asn72, and Asn118.

It belongs to the PTH family. Monomer.

It is found in the cytoplasm. The catalysed reaction is an N-acyl-L-alpha-aminoacyl-tRNA + H2O = an N-acyl-L-amino acid + a tRNA + H(+). Its function is as follows. Hydrolyzes ribosome-free peptidyl-tRNAs (with 1 or more amino acids incorporated), which drop off the ribosome during protein synthesis, or as a result of ribosome stalling. In terms of biological role, catalyzes the release of premature peptidyl moieties from peptidyl-tRNA molecules trapped in stalled 50S ribosomal subunits, and thus maintains levels of free tRNAs and 50S ribosomes. This is Peptidyl-tRNA hydrolase from Prochlorococcus marinus (strain SARG / CCMP1375 / SS120).